The sequence spans 213 residues: A-type ATP synthase subunit D (213 aa).

The protein belongs to the V-ATPase D subunit family. In terms of assembly, has multiple subunits with at least A(3), B(3), C, D, E, F, H, I and proteolipid K(x).

It is found in the cell membrane. Component of the A-type ATP synthase that produces ATP from ADP in the presence of a proton gradient across the membrane. This Thermoplasma acidophilum (strain ATCC 25905 / DSM 1728 / JCM 9062 / NBRC 15155 / AMRC-C165) protein is A-type ATP synthase subunit D.